Consider the following 73-residue polypeptide: MDVSLLLGKQTGRFSPLLLYGLAEYAAVKITSINIDIVFLEKMDVELIMTSGVIPFSSYGSSVSSATYATVPF.

This is an uncharacterized protein from Homo sapiens (Human).